A 500-amino-acid polypeptide reads, in one-letter code: Ent-cassadiene C11-alpha-hydroxylase 1 (500 aa).

A helical membrane pass occupies residues 4–24; sequence SQVWLLWGALSVAVLFYLSTL. A heme-binding site is contributed by Cys-442.

The protein belongs to the cytochrome P450 family. The cofactor is heme.

The protein localises to the membrane. It carries out the reaction ent-cassa-12,15-diene + reduced [NADPH--hemoprotein reductase] + O2 = ent-11beta-hydroxycassa-12,15-diene + oxidized [NADPH--hemoprotein reductase] + H2O + H(+). In terms of biological role, enzyme of the diterpenoid metabolism involved in the biosynthesis of antibacterial oryzalides such as phytocassane. Can use ent-cassadiene as substrate, but not C11-alpha-hydroxy-ent-cassadiene, ent-pimaradiene, ent-sandaracopimaradiene, ent-kaurene, ent-isokaurene, syn-pimaradiene, syn-stemarene, syn-stemodene. The sequence is that of Ent-cassadiene C11-alpha-hydroxylase 1 from Oryza sativa subsp. japonica (Rice).